The chain runs to 54 residues: Ribulose bisphosphate carboxylase large chain (54 aa).

A propeptide spanning residues methionine 1–serine 2 is cleaved from the precursor. Proline 3 is modified (N-acetylproline). N6,N6,N6-trimethyllysine is present on lysine 14.

Belongs to the RuBisCO large chain family. Type I subfamily. Heterohexadecamer of 8 large chains and 8 small chains.

It is found in the plastid. The protein localises to the chloroplast. It catalyses the reaction 2 (2R)-3-phosphoglycerate + 2 H(+) = D-ribulose 1,5-bisphosphate + CO2 + H2O. It carries out the reaction D-ribulose 1,5-bisphosphate + O2 = 2-phosphoglycolate + (2R)-3-phosphoglycerate + 2 H(+). RuBisCO catalyzes two reactions: the carboxylation of D-ribulose 1,5-bisphosphate, the primary event in carbon dioxide fixation, as well as the oxidative fragmentation of the pentose substrate in the photorespiration process. Both reactions occur simultaneously and in competition at the same active site. The chain is Ribulose bisphosphate carboxylase large chain (rbcL) from Magnolia liliiflora (Mulan magnolia).